A 216-amino-acid chain; its full sequence is ATP-dependent Clp protease proteolytic subunit (216 aa).

The active-site Nucleophile is serine 101. Residue histidine 126 is part of the active site.

Belongs to the peptidase S14 family. In terms of assembly, component of the chloroplastic Clp protease core complex.

Its subcellular location is the plastid. It localises to the chloroplast stroma. It catalyses the reaction Hydrolysis of proteins to small peptides in the presence of ATP and magnesium. alpha-casein is the usual test substrate. In the absence of ATP, only oligopeptides shorter than five residues are hydrolyzed (such as succinyl-Leu-Tyr-|-NHMec, and Leu-Tyr-Leu-|-Tyr-Trp, in which cleavage of the -Tyr-|-Leu- and -Tyr-|-Trp bonds also occurs).. Cleaves peptides in various proteins in a process that requires ATP hydrolysis. Has a chymotrypsin-like activity. Plays a major role in the degradation of misfolded proteins. This chain is ATP-dependent Clp protease proteolytic subunit, found in Saccharum hybrid (Sugarcane).